A 191-amino-acid chain; its full sequence is Small ribosomal subunit protein eS7y (191 aa).

The residue at position 1 (M1) is an N-acetylmethionine. Positions 17 to 50 (TEFEEQVTQALFDLENTNQELKSELKDLYINQAV) form a coiled coil.

This sequence belongs to the eukaryotic ribosomal protein eS7 family.

In Arabidopsis thaliana (Mouse-ear cress), this protein is Small ribosomal subunit protein eS7y (RPS7B).